Here is an 816-residue protein sequence, read N- to C-terminus: Protein kinase C-binding protein NELL2 (816 aa).

The signal sequence occupies residues Met-1–Gly-21. 4 N-linked (GlcNAc...) asparagine glycosylation sites follow: Asn-53, Asn-225, Asn-293, and Asn-298. Residues Pro-64–Cys-228 enclose the Laminin G-like domain. The VWFC 1 domain occupies Arg-272 to Lys-331. One can recognise an EGF-like 1 domain in the interval Gly-397–Glu-439. Disulfide bonds link Cys-401-Cys-413, Cys-407-Cys-422, and Cys-424-Cys-438. Asp-440, Ile-441, and Glu-443 together coordinate Ca(2+). The EGF-like 2; calcium-binding domain occupies Asp-440–Thr-481. Cystine bridges form between Cys-444–Cys-457, Cys-451–Cys-466, Cys-468–Cys-480, Cys-486–Cys-499, Cys-493–Cys-508, Cys-510–Cys-521, Cys-525–Cys-535, Cys-529–Cys-541, and Cys-543–Cys-552. The Ca(2+) site is built by Asn-459, Thr-460, and Ser-463. Residues Glu-482–Lys-522 enclose the EGF-like 3; calcium-binding domain. An N-linked (GlcNAc...) asparagine glycan is attached at Asn-517. In terms of domain architecture, EGF-like 4 spans Ala-523–Glu-553. O-linked (GlcNAc...) threonine glycosylation occurs at Thr-548. Residues Asp-555, Ile-556, and Glu-558 each contribute to the Ca(2+) site. The EGF-like 5; calcium-binding domain occupies Asp-555–Glu-601. 3 cysteine pairs are disulfide-bonded: Cys-559-Cys-572, Cys-566-Cys-581, and Cys-583-Cys-600. Residues Asn-574, Leu-575, and Trp-578 each contribute to the Ca(2+) site. Ca(2+)-binding residues include Asp-602, Ile-603, and Glu-605. Residues Asp-602–Thr-637 form the EGF-like 6; calcium-binding domain. Intrachain disulfides connect Cys-606/Cys-619, Cys-613/Cys-628, and Cys-630/Cys-636. N-linked (GlcNAc...) asparagine glycosylation occurs at Asn-615. 3 residues coordinate Ca(2+): Asn-621, Leu-622, and Gly-625. Asn-635 carries an N-linked (GlcNAc...) asparagine glycan. VWFC domains are found at residues Gly-638–Asp-693 and Ser-698–Val-756.

As to quaternary structure, homotrimer. Binds to PRKCB. Interacts with NICOL1; this interaction triggers epididymal differentiation. Interacts (via the EGF domains) with ROBO3 (via Fibronectin type-III 1 domain) with a 3:3 stoichiometry; this interaction promotes oligomerization of ROBO3 resulting in the repulsion of commissural axons in the midline.

The protein resides in the secreted. In terms of biological role, plays multiple roles in neural tissues, regulates neuronal proliferation, survival, differentiation, polarization, as well as axon guidance and synaptic functions. Plays an important role in axon development during neuronal differentiation through the MAPK intracellular signaling pathway. Via binding to its receptor ROBO3, plays a role in axon guidance, functioning as a repulsive axon guidance cue that contributes to commissural axon guidance to the midline. Required for neuron survival through the modulation of MAPK signaling pathways too. Involved in the regulation of hypothalamic GNRH secretion and the control of puberty. Functionally, epididymal-secreted protein that signals through a ROS1-pathway to regulate the epididymal initial segment (IS) maturation, sperm maturation and male fertility. The sequence is that of Protein kinase C-binding protein NELL2 from Homo sapiens (Human).